The sequence spans 651 residues: Translation initiation factor eIF2B subunit delta (651 aa).

A disordered region spans residues 1 to 108 (MSESEAKSRS…NERNVKKSTL (108 aa)). Residue serine 2 is modified to N-acetylserine. A compositionally biased stretch (low complexity) spans 11–28 (ATPPSKAKQATPTTTAAA). Composition is skewed to basic and acidic residues over residues 30–49 (GEKK…EKAA) and 76–90 (KQLQ…EQKQ). A Phosphoserine modification is found at serine 106. Residue threonine 121 is modified to Phosphothreonine. A disordered region spans residues 566-600 (AMENKPKGNKIGGKKGSEGESKDASNEEDSNSKNI). The span at 580–590 (KGSEGESKDAS) shows a compositional bias: basic and acidic residues.

The protein belongs to the eIF-2B alpha/beta/delta subunits family. As to quaternary structure, component of the translation initiation factor 2B (eIF2B) complex which is a heterodecamer of two sets of five different subunits: alpha, beta, gamma, delta and epsilon. Subunits alpha, beta and delta comprise a regulatory subcomplex and subunits epsilon and gamma comprise a catalytic subcomplex. Within the complex, the hexameric regulatory complex resides at the center, with the two heterodimeric catalytic subcomplexes bound on opposite sides.

The protein localises to the cytoplasm. The protein resides in the cytosol. Acts as a component of the translation initiation factor 2B (eIF2B) complex, which catalyzes the exchange of GDP for GTP on the eukaryotic initiation factor 2 (eIF2) complex gamma subunit. Its guanine nucleotide exchange factor activity is repressed when bound to eIF2 complex phosphorylated on the alpha subunit, thereby limiting the amount of methionyl-initiator methionine tRNA available to the ribosome and consequently global translation is repressed. It activates the synthesis of GCN4 in yeast under amino acid starvation conditions by suppressing the inhibitory effects of multiple AUG codons present in the leader of GCN4 mRNA. It may promote either repression or activation of GCN4 expression depending on amino acid availability. GCD2 is also required for cell viability. Its function can partially be replaced by GCN3 under normal growth conditions in GCD2-defective mutants, under AA starvation conditions GCN3 is an antagonist (GCN4 translational activator). In Saccharomyces cerevisiae (strain ATCC 204508 / S288c) (Baker's yeast), this protein is Translation initiation factor eIF2B subunit delta (GCD2).